The chain runs to 1475 residues: Peroxidasin homolog (1475 aa).

Residues 1-23 (MAVRPTRRCLLALLLCFAWWAMA) form the signal peptide. Residues 24–60 (VVASKQGAGCPSRCLCFRTTVRCMHLLLEAVPAVAPQ) enclose the LRRNT domain. 2 cysteine pairs are disulfide-bonded: Cys-33–Cys-39 and Cys-37–Cys-46. LRR repeat units lie at residues 58 to 81 (APQT…AFRR), 82 to 105 (LRSL…AFED), 107 to 129 (ENLK…AFKG), 130 to 153 (LASL…SFQH), 154 to 177 (LPKL…TFSQ), and 179 to 201 (ESMK…LWLA). The LRRCT domain maps to 189–241 (NALHCDCEILWLADLLKTYAQSGNAQAAATCEYPRRIQGRSVATITPEELNCE). 6 disulfide bridges follow: Cys-193–Cys-240, Cys-195–Cys-219, Cys-264–Cys-314, Cys-360–Cys-409, Cys-451–Cys-499, and Cys-543–Cys-591. Ig-like C2-type domains follow at residues 243 to 329 (PRIT…QEVT), 339 to 425 (PTFV…AFII), 430 to 517 (PQFT…LTVQ), and 518 to 607 (PRVT…MVLS). An N-linked (GlcNAc...) asparagine glycan is attached at Asn-387. An LRR 7 repeat occupies 402 to 425 (SDSGEYTCFASNSVDSIHATAFII). Residues Asn-637, Asn-696, Asn-716, and Asn-728 are each glycosylated (N-linked (GlcNAc...) asparagine). 4 cysteine pairs are disulfide-bonded: Cys-720–Cys-882, Cys-729–Cys-745, Cys-844–Cys-854, and Cys-848–Cys-872. Asp-823 lines the heme b pocket. His-824 functions as the Proton acceptor in the catalytic mechanism. Ca(2+) is bound at residue Asp-825. Ca(2+) contacts are provided by Thr-904, Tyr-906, Asp-908, and Ser-910. The cysteines at positions 956 and 967 are disulfide-linked. Asn-961 carries an N-linked (GlcNAc...) asparagine glycan. Residues Glu-977 and His-1071 each coordinate heme b. One copy of the LRR 8 repeat lies at 1148–1172 (ALDLAAINIQRGRDHGIPPYHDYRV). Tyr-1173 is subject to Phosphotyrosine. Cystine bridges form between Cys-1174–Cys-1231 and Cys-1272–Cys-1298. The N-linked (GlcNAc...) asparagine glycan is linked to Asn-1175. Ser-1177 bears the Phosphoserine mark. The LRR 9 repeat unit spans residues 1267–1288 (LARILCDNSDNITRVQQDVFRV). N-linked (GlcNAc...) asparagine glycosylation is found at Asn-1277 and Asn-1364. A required in homotrimerization region spans residues 1312–1407 (CCEDCRTRGQ…QINSLESRLS (96 aa)). In terms of domain architecture, VWFC spans 1409 to 1467 (TECVDDSGESHGGNTKWKKDPCTVCECKNGQITCFVEACQPAACPQPVKVEGACCPVCL).

Belongs to the peroxidase family. XPO subfamily. As to quaternary structure, homotrimer; disulfide-linked. The homotrimer form is predominant. Homooligomer; disulfide-linked. Oligomerization occurs intracellularly before C-terminal proteolytic cleavage. Interacts with PXDNL; this interaction inhibits the peroxidase activity of PXDN. It depends on Ca(2+) as a cofactor. Heme b is required as a cofactor. Post-translationally, processed by FURIN and the proteolytic processing largely depends on the peroxidase activity of PXDN. The proteolytic cleavage occurs after intracellular homotrimerization and releases into the extracellular matrix a large, catalytically active fragment and a smaller fragment consisting primarily of the C-terminal VWFC domain. The processing enhances both peroxidase activity and sulfilimine cross-links formation. As to expression, highly expressed in the cardiovascular system. In the embryo, expressed in the corneal epithelial layer. In the adult eyes, expressed in the corneal and lens epithelium. Expressed in lung.

The protein resides in the secreted. It localises to the extracellular space. Its subcellular location is the extracellular matrix. It is found in the endoplasmic reticulum. The protein localises to the cell surface. The protein resides in the basement membrane. The catalysed reaction is L-lysyl-[collagen] + L-methionyl-[collagen] + H2O2 = [collagen]-L-lysyl-N-S-L-methionyl-[collagen] + 2 H2O + H(+). It catalyses the reaction bromide + H2O2 = hypobromite + H2O. The enzyme catalyses L-lysyl-[collagen] + L-methionyl-[collagen] + hypobromite = [collagen]-L-lysyl-N-S-L-methionyl-[collagen] + bromide + H2O + H(+). It carries out the reaction (5R)-5-hydroxy-L-lysyl-[collagen] + L-methionyl-[collagen] + hypobromite = [collagen]-(5R)-5-hydroxy-L-lysyl-N-S-L-methionyl-[collagen] + bromide + H2O + H(+). The catalysed reaction is (5R)-5-hydroxy-L-lysyl-[collagen] + L-methionyl-[collagen] + H2O2 = [collagen]-(5R)-5-hydroxy-L-lysyl-N-S-L-methionyl-[collagen] + 2 H2O + H(+). It catalyses the reaction L-tyrosyl-[protein] + bromide + H2O2 + H(+) = 3-bromo-L-tyrosyl-[protein] + 2 H2O. The enzyme catalyses hypobromite + L-tyrosyl-[protein] + H(+) = 3-bromo-L-tyrosyl-[protein] + H2O. With respect to regulation, thiocyanate inhibits the formation of 3-bromotyrosine. In terms of biological role, catalyzes the two-electron oxidation of bromide by hydrogen peroxide and generates hypobromite as a reactive intermediate which mediates the formation of sulfilimine cross-links between methionine and hydroxylysine residues within an uncross-linked collagen IV/COL4A1 NC1 hexamer. In turns, directly contributes to the collagen IV network-dependent fibronectin/FN and laminin assembly, which is required for full extracellular matrix (ECM)-mediated signaling. Thus, sulfilimine cross-links are essential for growth factor-induced cell proliferation and survival in endothelial cells, an event essential to basement membrane integrity. In addition, through the bromide oxidation, may promote tubulogenesis and induce angiogenesis through ERK1/2, Akt, and FAK pathways. Moreover brominates alpha2 collagen IV chain/COL4A2 at 'Tyr-1480' and leads to bromine enrichment of the basement membranes. In vitro, can also catalyze the two-electron oxidation of thiocyanate and iodide and these two substrates could effectively compete with bromide and thus inhibit the formation of sulfilimine bonds. Binds laminins. May play a role in the organization of eyeball structure and lens development during eye development. This Mus musculus (Mouse) protein is Peroxidasin homolog.